A 430-amino-acid polypeptide reads, in one-letter code: Carbamoyl phosphate synthase small chain, chloroplastic (430 aa).

A chloroplast-targeting transit peptide spans 1-35 (MAMATRTLGFVLPTSLSSQPSFDRRGGGFRVSVIR). Residues 243–429 (KVIAYDFGIK…IELMKRSKQS (187 aa)) form the Glutamine amidotransferase type-1 domain. Catalysis depends on Cys-318, which acts as the Nucleophile. Active-site residues include His-402 and Glu-404.

The protein belongs to the CarA family. Heterodimer composed of 2 chains; the small (or glutamine) chain promotes the hydrolysis of glutamine to ammonia, which is used by the large (or ammonia) chain to synthesize carbamoyl phosphate.

It is found in the plastid. Its subcellular location is the chloroplast. The catalysed reaction is hydrogencarbonate + L-glutamine + 2 ATP + H2O = carbamoyl phosphate + L-glutamate + 2 ADP + phosphate + 2 H(+). It catalyses the reaction L-glutamine + H2O = L-glutamate + NH4(+). It functions in the pathway amino-acid biosynthesis; L-arginine biosynthesis; carbamoyl phosphate from bicarbonate: step 1/1. The protein operates within pyrimidine metabolism; UMP biosynthesis via de novo pathway; (S)-dihydroorotate from bicarbonate: step 1/3. In terms of biological role, small subunit of the arginine-specific carbamoyl phosphate synthase (CPSase). CPSase catalyzes the formation of carbamoyl phosphate from the ammonia moiety of glutamine, carbonate, and phosphate donated by ATP, the first step of the arginine biosynthetic pathway. The small subunit (glutamine amidotransferase) binds and cleaves glutamine to supply the large subunit with the substrate ammonia. This Arabidopsis thaliana (Mouse-ear cress) protein is Carbamoyl phosphate synthase small chain, chloroplastic (CARA).